The sequence spans 385 residues: 1-deoxy-D-xylulose 5-phosphate reductoisomerase (385 aa).

Residues Thr-11, Gly-12, Ser-13, Ile-14, Gln-39, and Asn-117 each coordinate NADPH. Lys-118 is a binding site for 1-deoxy-D-xylulose 5-phosphate. Position 119 (Glu-119) interacts with NADPH. A Mn(2+)-binding site is contributed by Asp-143. Positions 144, 145, 170, and 193 each coordinate 1-deoxy-D-xylulose 5-phosphate. Glu-145 contributes to the Mn(2+) binding site. Position 199 (Gly-199) interacts with NADPH. Residues Ser-206, Asn-211, Lys-212, and Glu-215 each contribute to the 1-deoxy-D-xylulose 5-phosphate site. Mn(2+) is bound at residue Glu-215.

It belongs to the DXR family. It depends on Mg(2+) as a cofactor. Mn(2+) serves as cofactor.

It catalyses the reaction 2-C-methyl-D-erythritol 4-phosphate + NADP(+) = 1-deoxy-D-xylulose 5-phosphate + NADPH + H(+). It participates in isoprenoid biosynthesis; isopentenyl diphosphate biosynthesis via DXP pathway; isopentenyl diphosphate from 1-deoxy-D-xylulose 5-phosphate: step 1/6. Functionally, catalyzes the NADPH-dependent rearrangement and reduction of 1-deoxy-D-xylulose-5-phosphate (DXP) to 2-C-methyl-D-erythritol 4-phosphate (MEP). This chain is 1-deoxy-D-xylulose 5-phosphate reductoisomerase, found in Thermomicrobium roseum (strain ATCC 27502 / DSM 5159 / P-2).